The following is a 360-amino-acid chain: Photosystem II protein D1 (360 aa).

Topologically, residues 1–28 are cytoplasmic; that stretch reads MTTTLQRRESANLWERFCNWVTSTDNRL. The helical transmembrane segment at 29–46 threads the bilayer; sequence YVGWFGVIMIPTLLAATI. Residues 47–117 are Lumenal-facing; that stretch reads CFVIAFIAAP…NGGPYQLIIF (71 aa). His-118 is a binding site for chlorophyll a. The chain crosses the membrane as a helical span at residues 118 to 133; that stretch reads HFLLGASCYMGRQWEL. Pheophytin a is bound by residues Tyr-126 and Gln-130. Residues 134–141 lie on the Cytoplasmic side of the membrane; that stretch reads SYRLGMRP. Residues 142–156 form a helical membrane-spanning segment; it reads WICVAYSAPLASAFA. Tyr-147 provides a ligand contact to pheophytin a. Over 157–196 the chain is Lumenal; it reads VFLIYPIGQGSFSDGMPLGISGTFNFMIVFQAEHNILMHP. Positions 170 and 189 each coordinate [CaMn4O5] cluster. The helical transmembrane segment at 197 to 218 threads the bilayer; that stretch reads FHQLGVAGVFGGALFCAMHGSL. His-198 provides a ligand contact to chlorophyll a. Residue Met-214 participates in pheophytin a binding. A quinone contacts are provided by residues His-215 and 264–265; that span reads SF. His-215 lines the Fe cation pocket. Residues 219-273 lie on the Cytoplasmic side of the membrane; the sequence is VTSSLIRETTETESANYGYKFGQEEETYNIVAAHGYFGRLIFQYASFNNSRSLHF. His-272 contributes to the Fe cation binding site. A helical membrane pass occupies residues 274–288; the sequence is FLAAWRVVGVWFAAL. The Lumenal segment spans residues 289–360; that stretch reads GISTMAFNLN…VAMIAPSING (72 aa). [CaMn4O5] cluster-binding residues include His-332, Glu-333, Asp-342, and Ala-344. The propeptide occupies 345 to 360; that stretch reads SAESAPVAMIAPSING.

This sequence belongs to the reaction center PufL/M/PsbA/D family. PSII is composed of 1 copy each of membrane proteins PsbA, PsbB, PsbC, PsbD, PsbE, PsbF, PsbH, PsbI, PsbJ, PsbK, PsbL, PsbM, PsbT, PsbX, PsbY, PsbZ, Psb30/Ycf12, peripheral proteins PsbO, CyanoQ (PsbQ), PsbU, PsbV and a large number of cofactors. It forms dimeric complexes. The D1/D2 heterodimer binds P680, chlorophylls that are the primary electron donor of PSII, and subsequent electron acceptors. It shares a non-heme iron and each subunit binds pheophytin, quinone, additional chlorophylls, carotenoids and lipids. D1 provides most of the ligands for the Mn4-Ca-O5 cluster of the oxygen-evolving complex (OEC). There is also a Cl(-1) ion associated with D1 and D2, which is required for oxygen evolution. The PSII complex binds additional chlorophylls, carotenoids and specific lipids. serves as cofactor. Post-translationally, C-terminally processed by CtpA; processing is essential to allow assembly of the oxygen-evolving complex and thus photosynthetic growth. Tyr-161 forms a radical intermediate that is referred to as redox-active TyrZ, YZ or Y-Z.

The protein localises to the cellular thylakoid membrane. The catalysed reaction is 2 a plastoquinone + 4 hnu + 2 H2O = 2 a plastoquinol + O2. Photosystem II (PSII) is a light-driven water:plastoquinone oxidoreductase that uses light energy to abstract electrons from H(2)O, generating O(2) and a proton gradient subsequently used for ATP formation. It consists of a core antenna complex that captures photons, and an electron transfer chain that converts photonic excitation into a charge separation. The D1/D2 (PsbA/PsbD) reaction center heterodimer binds P680, the primary electron donor of PSII as well as several subsequent electron acceptors. This Thermostichus vulcanus (Synechococcus vulcanus) protein is Photosystem II protein D1.